Consider the following 213-residue polypeptide: Peptidyl-tRNA hydrolase (213 aa).

Tyrosine 26 contacts tRNA. The active-site Proton acceptor is the histidine 31. TRNA is bound by residues tyrosine 78, asparagine 80, and asparagine 126.

Belongs to the PTH family. As to quaternary structure, monomer.

It is found in the cytoplasm. The enzyme catalyses an N-acyl-L-alpha-aminoacyl-tRNA + H2O = an N-acyl-L-amino acid + a tRNA + H(+). Functionally, hydrolyzes ribosome-free peptidyl-tRNAs (with 1 or more amino acids incorporated), which drop off the ribosome during protein synthesis, or as a result of ribosome stalling. Its function is as follows. Catalyzes the release of premature peptidyl moieties from peptidyl-tRNA molecules trapped in stalled 50S ribosomal subunits, and thus maintains levels of free tRNAs and 50S ribosomes. This Nostoc punctiforme (strain ATCC 29133 / PCC 73102) protein is Peptidyl-tRNA hydrolase.